A 106-amino-acid chain; its full sequence is Protein translation factor SUI1 homolog (106 aa).

This sequence belongs to the SUI1 family.

The protein is Protein translation factor SUI1 homolog of Methanopyrus kandleri (strain AV19 / DSM 6324 / JCM 9639 / NBRC 100938).